A 382-amino-acid chain; its full sequence is Protein-arginine rhamnosyltransferase (382 aa).

18-19 (FG) contacts dTDP. The active-site Proton acceptor is D20. Residues D20, Y187, 250-252 (VPQ), and 268-272 (RGEDS) contribute to the dTDP-beta-L-rhamnose site. DTDP-binding positions include Y187, 250 to 252 (VPQ), and 268 to 272 (RGEDS). Residue E270 is part of the active site.

It belongs to the glycosyltransferase 104 family.

It carries out the reaction dTDP-beta-L-rhamnose + L-arginyl-[protein] = N(omega)-(alpha-L-rhamnosyl)-L-arginyl-[protein] + dTDP + H(+). In terms of biological role, protein-arginine rhamnosyltransferase that catalyzes the transfer of a single rhamnose to elongation factor P (EF-P) on 'Lys-32', a modification required for EF-P-dependent rescue of polyproline stalled ribosomes. The protein is Protein-arginine rhamnosyltransferase of Neisseria meningitidis serogroup B / serotype 15 (strain H44/76).